Consider the following 337-residue polypeptide: 1-aminocyclopropane-1-carboxylate deaminase (337 aa).

An N6-(pyridoxal phosphate)lysine modification is found at Lys-50. Ser-77 (nucleophile) is an active-site residue.

Belongs to the ACC deaminase/D-cysteine desulfhydrase family. In terms of assembly, homotrimer. It depends on pyridoxal 5'-phosphate as a cofactor.

The catalysed reaction is 1-aminocyclopropane-1-carboxylate + H2O = 2-oxobutanoate + NH4(+). Catalyzes a cyclopropane ring-opening reaction, the irreversible conversion of 1-aminocyclopropane-1-carboxylate (ACC) to ammonia and alpha-ketobutyrate. Allows growth on ACC as a nitrogen source. The sequence is that of 1-aminocyclopropane-1-carboxylate deaminase from Allorhizobium ampelinum (strain ATCC BAA-846 / DSM 112012 / S4) (Agrobacterium vitis (strain S4)).